A 564-amino-acid polypeptide reads, in one-letter code: Agglutinin (564 aa).

Residues 1 to 24 form the signal peptide; it reads MYAVATWLCFGSTSGWSFTLEDNN. Residue 32-34 participates in beta-D-galactose binding; the sequence is IIN. An N-linked (GlcNAc...) asparagine glycan is attached at asparagine 34. Residues tyrosine 104, tyrosine 147, glutamate 200, and arginine 203 contribute to the active site. Residues 104–105 and 145–147 each bind AMP; these read YV and GNY. Asparagine 259 carries N-linked (GlcNAc...) asparagine glycosylation. A disulfide bridge connects residues cysteine 282 and cysteine 306. Residues 291–302 constitute a propeptide, linker peptide; the sequence is SLLIRPVVPNFN. A Ricin B-type lectin 1 domain is found at 309-436; that stretch reads PEPIVRIVGR…YAVSQGWLPT (128 aa). Residues isoleucine 312, 324-328, glutamine 337, lysine 342, and asparagine 348 contribute to the beta-D-galactose site; that span reads DVTGE. The stretch at 319–361 is one 1-alpha repeat; sequence NGLCVDVTGEEFFDGNPIQLWPCKSNTDWNQLWTLRKDSTIRS. A disulfide bond links cysteine 322 and cysteine 341. The stretch at 362–402 is one 1-beta repeat; the sequence is NGKCLTISKSSPRQQVVIYNCSTATVGATRWQIWDNRTIIN. A disulfide bridge links cysteine 365 with cysteine 382. N-linked (GlcNAc...) asparagine glycans are attached at residues asparagine 397 and asparagine 437. The 1-gamma repeat unit spans residues 405–437; the sequence is SGLVLAATSGNSGTKLTVQTNIYAVSQGWLPTN. A beta-D-galactose-binding site is contributed by asparagine 437. Residues 439 to 563 form the Ricin B-type lectin 2 domain; that stretch reads TQPFVTTIVG…GNLNQIWLPL (125 aa). One copy of the 2-alpha repeat lies at 450–485; it reads YGMCLQANSGKVWLEDCTSEKAEQQWALYADGSIRP. 2 disulfide bridges follow: cysteine 453–cysteine 466 and cysteine 492–cysteine 509. A 2-beta repeat occupies 489–528; that stretch reads RDNCLTTDANIKGTVVKILSCGPASSGQRWMFKNDGTILN. The 2-gamma repeat unit spans residues 531–558; the sequence is NGLVLDVRRSDPSLKQIIVHPFHGNLNQ.

This sequence in the N-terminal section; belongs to the ribosome-inactivating protein family. Type 2 RIP subfamily.

It carries out the reaction Endohydrolysis of the N-glycosidic bond at one specific adenosine on the 28S rRNA.. The chain is Agglutinin from Ricinus communis (Castor bean).